A 174-amino-acid polypeptide reads, in one-letter code: CD164 sialomucin-like 2 protein (174 aa).

An N-terminal signal peptide occupies residues 1-29 (MEAPGPRALRTALCGGCCCLLLCAQLAVA). Residues 30–141 (GKGARGFGRG…AHSPGFDGAS (112 aa)) are Extracellular-facing. N-linked (GlcNAc...) asparagine glycans are attached at residues asparagine 71 and asparagine 103. Residues 142-162 (FIGGVVLVLSLQAVAFFVLHF) form a helical membrane-spanning segment. Over 163–174 (LKAKDSTYQTLI) the chain is Cytoplasmic.

This sequence belongs to the CD164 family.

It localises to the membrane. The chain is CD164 sialomucin-like 2 protein (CD164L2) from Homo sapiens (Human).